A 664-amino-acid polypeptide reads, in one-letter code: Probable LRR receptor-like serine/threonine-protein kinase At1g63430 (664 aa).

Positions 1 to 22 (MRSKYFCSLALVLGLFFVSCDG) are cleaved as a signal peptide. Over 23-288 (FASNEVQALR…KHHRASKPKW (266 aa)) the chain is Extracellular. Asn-75 carries N-linked (GlcNAc...) asparagine glycosylation. 4 LRR repeats span residues 94-116 (YLQELILHGNILIGTIPKEIGNL), 118-140 (NLKILDLGNNHLMGPIPAEIGSL), 142-165 (GIMIINLQSNGLTGKLPAELGNLK), and 166-178 (YLRELHIDRNRLQ). Asn-197 carries an N-linked (GlcNAc...) asparagine glycan. A helical transmembrane segment spans residues 289-309 (LLALEIVTGSMVGLLLLVALF). The Cytoplasmic segment spans residues 310–664 (SAVHRWNNRS…LAWAELALDS (355 aa)). Positions 360-642 (EDFSNIIGLS…ELCETLESRI (283 aa)) constitute a Protein kinase domain.

It belongs to the protein kinase superfamily. Ser/Thr protein kinase family.

It is found in the cell membrane. The catalysed reaction is L-seryl-[protein] + ATP = O-phospho-L-seryl-[protein] + ADP + H(+). It catalyses the reaction L-threonyl-[protein] + ATP = O-phospho-L-threonyl-[protein] + ADP + H(+). The protein is Probable LRR receptor-like serine/threonine-protein kinase At1g63430 of Arabidopsis thaliana (Mouse-ear cress).